The following is a 484-amino-acid chain: Regulator of G-protein signaling 9 (484 aa).

The 76-residue stretch at proline 30–threonine 105 folds into the DEP domain. One can recognise a G protein gamma domain in the interval valine 219 to leucine 280. The RGS domain occupies asparagine 299–leucine 414. The disordered stretch occupies residues threonine 460–lysine 484. Positions lysine 470–lysine 484 are enriched in basic and acidic residues.

In terms of assembly, heterodimer with GNB5. Interacts with RGS7BP, leading to regulate the subcellular location of the heterodimer formed with GNB5. Component of the RGS9-1-Gbeta5 complex composed of RGS9 (RGS9-1), Gbeta5 (GNB5) and RGS9BP. Interacts with PDE6G and GNAT1. In terms of processing, phosphorylation is decreased by light exposition. Photoreceptor outer segments.

It is found in the membrane. In terms of biological role, inhibits signal transduction by increasing the GTPase activity of G protein alpha subunits thereby driving them into their inactive GDP-bound form. Binds to GNAT1. Involved in phototransduction; key element in the recovery phase of visual transduction. The chain is Regulator of G-protein signaling 9 (RGS9) from Bos taurus (Bovine).